Reading from the N-terminus, the 65-residue chain is Hirudin-3 (65 aa).

The interval V1–Y3 is interaction with thrombin active site. Intrachain disulfides connect C6–C14, C16–C28, and C22–C39. Residues C39–Q65 are disordered. T45 is a glycosylation site (O-linked (GalNAc...) threonine). The tract at residues D55–Q65 is interaction with fibrinogen-binding exosite of thrombin. Positions D55 to Q65 are enriched in acidic residues. Y63 carries the post-translational modification Sulfotyrosine.

This sequence belongs to the protease inhibitor I14 (hirudin) family.

It localises to the secreted. Its function is as follows. Hirudin is a potent thrombin-specific protease inhibitor. It forms a stable non-covalent complex with alpha-thrombin, thereby abolishing its ability to cleave fibrinogen. This Hirudo medicinalis (Medicinal leech) protein is Hirudin-3.